Reading from the N-terminus, the 308-residue chain is Ornithine carbamoyltransferase (308 aa).

Carbamoyl phosphate contacts are provided by residues 57–60, Gln84, Arg108, and 135–138; these read STRT and HPCQ. Residues Asn166, Asp224, and 228 to 229 each bind L-ornithine; that span reads SM. Carbamoyl phosphate contacts are provided by residues 264–265 and Arg292; that span reads CL.

This sequence belongs to the aspartate/ornithine carbamoyltransferase superfamily. OTCase family.

The protein localises to the cytoplasm. It carries out the reaction carbamoyl phosphate + L-ornithine = L-citrulline + phosphate + H(+). It functions in the pathway amino-acid degradation; L-arginine degradation via ADI pathway; carbamoyl phosphate from L-arginine: step 2/2. Functionally, reversibly catalyzes the transfer of the carbamoyl group from carbamoyl phosphate (CP) to the N(epsilon) atom of ornithine (ORN) to produce L-citrulline. This is Ornithine carbamoyltransferase from Ralstonia pickettii (strain 12J).